The primary structure comprises 518 residues: Arginyl-tRNA--protein transferase 1 (518 aa).

Residue Ser-169 is modified to Phosphoserine. Residues 175–203 (EKLGSGEPSHSVKVHTVPKPGKGADLSKP) are disordered.

It belongs to the R-transferase family. In terms of assembly, monomer. Interacts with LIAT1; LIAT1 is not a substrate of ATE1, the interaction takes place in the cytoplasm and seems to increase ATE1 arginyltransferase activity.

The protein resides in the nucleus. It is found in the cytoplasm. It carries out the reaction an N-terminal L-alpha-aminoacyl-[protein] + L-arginyl-tRNA(Arg) = an N-terminal L-arginyl-L-aminoacyl-[protein] + tRNA(Arg) + H(+). Involved in the post-translational conjugation of arginine to the N-terminal aspartate or glutamate of a protein. This arginylation is required for degradation of the protein via the ubiquitin pathway. Does not arginylate cysteine residues. The chain is Arginyl-tRNA--protein transferase 1 from Homo sapiens (Human).